Reading from the N-terminus, the 75-residue chain is Conotoxin Vc6.15 (75 aa).

The N-terminal stretch at 1–19 is a signal peptide; sequence MEKLTILLHVAAVLMSTQA. Residues 20–41 constitute a propeptide that is removed on maturation; it reads LIQEQRQKAKINLFSKRKPSAE. Cystine bridges form between C49/C62, C55/C66, and C61/C71.

Belongs to the conotoxin O2 superfamily. In terms of tissue distribution, expressed by the venom duct.

It localises to the secreted. Its function is as follows. Inhibits voltage-gated ion channels. The chain is Conotoxin Vc6.15 from Conus victoriae (Queen Victoria cone).